The primary structure comprises 357 residues: DNA replication and repair protein RecF (357 aa).

Position 30-37 (30-37 (GANGSGKT)) interacts with ATP.

This sequence belongs to the RecF family.

Its subcellular location is the cytoplasm. Functionally, the RecF protein is involved in DNA metabolism; it is required for DNA replication and normal SOS inducibility. RecF binds preferentially to single-stranded, linear DNA. It also seems to bind ATP. The sequence is that of DNA replication and repair protein RecF from Salmonella paratyphi B (strain ATCC BAA-1250 / SPB7).